Consider the following 1101-residue polypeptide: Serine/threonine-protein kinase PSK2 (1101 aa).

A Phosphothreonine modification is found at threonine 118. The region spanning 841 to 1099 (FTILQVMGEG…IDEIYEDKWL (259 aa)) is the Protein kinase domain. Residues 847 to 855 (MGEGAYGKV) and lysine 870 each bind ATP. Aspartate 975 functions as the Proton acceptor in the catalytic mechanism.

It belongs to the protein kinase superfamily. Ser/Thr protein kinase family.

The protein resides in the cytoplasm. It carries out the reaction L-seryl-[protein] + ATP = O-phospho-L-seryl-[protein] + ADP + H(+). The enzyme catalyses L-threonyl-[protein] + ATP = O-phospho-L-threonyl-[protein] + ADP + H(+). Its function is as follows. Serine/threonine-protein kinase involved in the control of sugar metabolism and translation. Phosphorylates UGP1, which is required for normal glycogen and beta-(1,6)-glucan synthesis. This phosphorylation shifts glucose partitioning toward cell wall glucan synthesis at the expense of glycogen synthesis. Also phosphorylates the glycogen synthase GSY2 and the translation factors CAF20, TIF11 and SRO9. The chain is Serine/threonine-protein kinase PSK2 (PSK2) from Saccharomyces cerevisiae (strain ATCC 204508 / S288c) (Baker's yeast).